The sequence spans 388 residues: Formate-dependent phosphoribosylglycinamide formyltransferase (388 aa).

Residues 11-12 (EL) and Glu71 contribute to the N(1)-(5-phospho-beta-D-ribosyl)glycinamide site. Residues Arg103, Lys144, 149 to 154 (SSGKGQ), 184 to 187 (EEFI), and Glu192 contribute to the ATP site. The 193-residue stretch at 108 to 300 (DLAAKELGLK…EFELHLRAVL (193 aa)) folds into the ATP-grasp domain. Residues Glu257 and Glu270 each coordinate Mg(2+). Residues Asp277, Lys349, and 356–357 (RR) each bind N(1)-(5-phospho-beta-D-ribosyl)glycinamide.

The protein belongs to the PurK/PurT family. Homodimer.

The catalysed reaction is N(1)-(5-phospho-beta-D-ribosyl)glycinamide + formate + ATP = N(2)-formyl-N(1)-(5-phospho-beta-D-ribosyl)glycinamide + ADP + phosphate + H(+). It participates in purine metabolism; IMP biosynthesis via de novo pathway; N(2)-formyl-N(1)-(5-phospho-D-ribosyl)glycinamide from N(1)-(5-phospho-D-ribosyl)glycinamide (formate route): step 1/1. Its function is as follows. Involved in the de novo purine biosynthesis. Catalyzes the transfer of formate to 5-phospho-ribosyl-glycinamide (GAR), producing 5-phospho-ribosyl-N-formylglycinamide (FGAR). Formate is provided by PurU via hydrolysis of 10-formyl-tetrahydrofolate. This is Formate-dependent phosphoribosylglycinamide formyltransferase from Bacteroides thetaiotaomicron (strain ATCC 29148 / DSM 2079 / JCM 5827 / CCUG 10774 / NCTC 10582 / VPI-5482 / E50).